The sequence spans 282 residues: Trihydroxynaphthalene reductase PfmaI (282 aa).

3 residues coordinate NADP(+): Ile-41, Asn-114, and Arg-147. Active-site proton donor residues include Ser-164 and Tyr-178. 4 residues coordinate NADP(+): Tyr-178, Lys-182, Ile-211, and Thr-213. Lys-182 (lowers pKa of active site Tyr) is an active-site residue.

It belongs to the short-chain dehydrogenases/reductases (SDR) family.

The protein operates within pigment biosynthesis; melanin biosynthesis. Trihydroxynaphthalene reductase involved the biosynthesis of dihydroxynaphthalene (DHN)-melanin, a bluish-green pigment forming a dark layer in the conidial wall that protects the conidia from UV radiations. The first step of the pathway is the production of the pentaketide 1,3,6,8-tetrahydroxynaphthalene (1,3,6,8-THN or T4HN) by the polyketide synthase PfmaE though condensation of acetyl-CoA with malonyl-CoA. T4HN is not stable and easily oxidizes into the stable form flaviolin. T4HN is also substrate of the hydroxynaphthalene reductase PfmaG to yield scytalone. The scytalone dehydratase PfmaJ then reduces scytalone to 1,3,8-THN. 1,3,8-THN is then substrate of the hydroxynaphthalene reductase PfmaI to yield vermelone. Vermelone is further converted by the multicopper oxidase PfmaD to 1,8-DHN. Finally the laccase PFICI_06862 transforms 1,8-DHN to DHN-melanin. The roles of the 5-oxoprolinase PfmaA and the proline iminopeptidase PfmaB within the cluster have not been elucidated yet. The polypeptide is Trihydroxynaphthalene reductase PfmaI (Pestalotiopsis fici (strain W106-1 / CGMCC3.15140)).